Here is a 99-residue protein sequence, read N- to C-terminus: Nucleoid-associated protein EbfC (99 aa).

This sequence belongs to the YbaB/EbfC family. As to quaternary structure, homodimer.

It is found in the cytoplasm. Its subcellular location is the nucleoid. Functionally, binds to DNA and alters its conformation. May be involved in regulation of gene expression, nucleoid organization and DNA protection. This chain is Nucleoid-associated protein EbfC, found in Borrelia duttonii (strain Ly).